Consider the following 758-residue polypeptide: Probable TonB-dependent receptor NMB0964 (758 aa).

Positions 1 to 24 (MAQTTLKPIVLSILLINTPLLAQA) are cleaved as a signal peptide. The region spanning 50–161 (LLHTSTASDK…VAGLVDVADG (112 aa)) is the TBDR plug domain. The TBDR beta-barrel domain maps to 171 to 758 (GVSGELGLRL…SFTGGVNVKF (588 aa)). Positions 741-758 (SDTPQMGRSFTGGVNVKF) match the TonB C-terminal box motif.

This sequence belongs to the TonB-dependent receptor family.

The protein localises to the cell outer membrane. Probable receptor, TonB-dependent. The protein is Probable TonB-dependent receptor NMB0964 of Neisseria meningitidis serogroup B (strain ATCC BAA-335 / MC58).